Consider the following 736-residue polypeptide: Melanotransferrin (736 aa).

The N-terminal stretch at 1-19 (MRCRSAAMWIFLALRTALG) is a signal peptide. 2 Transferrin-like domains span residues 23-357 (VRWC…GLLC) and 366-706 (LRWC…GMQS). Disulfide bonds link Cys26–Cys63 and Cys36–Cys54. Residues Asp78 and Tyr107 each coordinate Fe(3+). Asn118 is a glycosylation site (N-linked (GlcNAc...) asparagine). Disulfide bonds link Cys130/Cys216, Cys172/Cys189, Cys186/Cys199, and Cys257/Cys271. Residue Thr132 participates in hydrogencarbonate binding. Asn135 carries N-linked (GlcNAc...) asparagine glycosylation. Hydrogencarbonate contacts are provided by Arg136, Val138, and Gly139. A Fe(3+)-binding site is contributed by Tyr210. Positions 279 and 451 each coordinate Fe(3+). A glycan (N-linked (GlcNAc...) asparagine) is linked at Asn515. Position 625 (His625) interacts with Fe(3+). Gly711 carries the GPI-anchor amidated glycine lipid modification. Residues 712–736 (AAVGAPGASLLPLLPLAVGLLLSSL) constitute a propeptide, removed in mature form.

The protein belongs to the transferrin family.

The protein resides in the cell membrane. Functionally, involved in iron cellular uptake. Seems to be internalized and then recycled back to the cell membrane. Binds a single atom of iron per subunit. Could also bind zinc. The protein is Melanotransferrin of Oryctolagus cuniculus (Rabbit).